A 147-amino-acid chain; its full sequence is Delta-latroinsectotoxin-Lhe1a (147 aa).

ANK repeat units follow at residues 57–59 (VSI), 66–78 (NNWTPLHFAIYFK), 79–96 (KNPAVSAVLILENKDIEA), and 98–125 (TSIMLIVQKLLLELYNYFINNYAETLDE).

Belongs to the cationic peptide 01 (latrotoxin) family. 04 (delta-latroinsectotoxin) subfamily. As to quaternary structure, homotetramer in membrane. In terms of tissue distribution, expressed by the venom gland.

The protein localises to the secreted. The protein resides in the target cell membrane. Insecticidal presynaptic neurotoxin that induces massive neurotransmitter release at insect (but not vertebrate) neuromuscular junctions. Native toxin forms cation-permeable pores (with high permeability to calcium) in lipid membranes locust muscle membrane and artificial lipid bilayers. May bind to insect neurexin-1 homolog, insect adhesion G protein-coupled receptor L1 homolog, and insect receptor-type tyrosine-protein phosphatase S homolog, and induces neurotransmitter exocytosis both by forming tetrameric pores in membranes and signaling via G protein-coupled receptor. Oligomerization is a process independent of divalent cations. The chain is Delta-latroinsectotoxin-Lhe1a from Latrodectus hesperus (Western black widow spider).